Reading from the N-terminus, the 322-residue chain is MNRTLQPDRGASQTAPAAHQARAFAPASVANVAVGFDLLGYPMDQVGDTVTVRRIDTPQVRIAAIRGIAQPLPLQTERNTAGAALLSMHRDLALPFGFELEIDKGIPLSSGMGGSAASCVAALLAANALLEEPLRREHLYRYALDGEAVASGSRHGDNLGPLFLGGLVLCTLERLVPVTVPAAWHSLLVHPDTLLETRRAREVLKDPYLLPDIVTQSANLALVLAGCYHGDAELVRAGLRDVLIEPRRAPLIAGFTAAQQAALQADAMGASISGAGPSVFAWFQTRSAAEAAAPAVRAAFTAAGFDSQAWVTPLISPGARLL.

107-117 provides a ligand contact to ATP; sequence PLSSGMGGSAA.

It belongs to the GHMP kinase family. Homoserine kinase subfamily.

It is found in the cytoplasm. It catalyses the reaction L-homoserine + ATP = O-phospho-L-homoserine + ADP + H(+). It functions in the pathway amino-acid biosynthesis; L-threonine biosynthesis; L-threonine from L-aspartate: step 4/5. Its function is as follows. Catalyzes the ATP-dependent phosphorylation of L-homoserine to L-homoserine phosphate. The protein is Homoserine kinase of Xylella fastidiosa (strain 9a5c).